The sequence spans 648 residues: Biosynthetic arginine decarboxylase (648 aa).

The residue at position 109 (Lys-109) is an N6-(pyridoxal phosphate)lysine. 291–301 lines the substrate pocket; it reads LDVGGGLGVDY.

The protein belongs to the Orn/Lys/Arg decarboxylase class-II family. SpeA subfamily. Mg(2+) serves as cofactor. It depends on pyridoxal 5'-phosphate as a cofactor.

It catalyses the reaction L-arginine + H(+) = agmatine + CO2. Functionally, catalyzes the biosynthesis of agmatine from arginine. This Prochlorococcus marinus (strain MIT 9313) protein is Biosynthetic arginine decarboxylase.